Reading from the N-terminus, the 511-residue chain is Xylose import ATP-binding protein XylG (511 aa).

ABC transporter domains follow at residues 6-244 (LEMR…VGRE) and 261-506 (FEAR…IGKP).

Belongs to the ABC transporter superfamily. Xylose importer (TC 3.A.1.2.4) family. As to quaternary structure, the complex is composed of two ATP-binding proteins (XylG), two transmembrane proteins (XylH) and a solute-binding protein (XylF).

The protein resides in the cell inner membrane. It carries out the reaction D-xylose(out) + ATP + H2O = D-xylose(in) + ADP + phosphate + H(+). Part of the ABC transporter complex XylFGH involved in xylose import. Responsible for energy coupling to the transport system. This chain is Xylose import ATP-binding protein XylG, found in Brucella melitensis biotype 1 (strain ATCC 23456 / CCUG 17765 / NCTC 10094 / 16M).